A 130-amino-acid polypeptide reads, in one-letter code: Holo-[acyl-carrier-protein] synthase (130 aa).

The Mg(2+) site is built by D8 and E62.

It belongs to the P-Pant transferase superfamily. AcpS family. Mg(2+) is required as a cofactor.

It localises to the cytoplasm. The enzyme catalyses apo-[ACP] + CoA = holo-[ACP] + adenosine 3',5'-bisphosphate + H(+). Functionally, transfers the 4'-phosphopantetheine moiety from coenzyme A to a Ser of acyl-carrier-protein. The chain is Holo-[acyl-carrier-protein] synthase from Herminiimonas arsenicoxydans.